The sequence spans 78 residues: MRTDSSKMTDVESGVANFASSARAGRRNALPDIQSSAATDGTSDLPLKLEALSVKEDAKEKDEKTTQDQLEKPQNEEK.

Residues 1-10 (MRTDSSKMTD) are compositionally biased toward basic and acidic residues. The tract at residues 1–78 (MRTDSSKMTD…QLEKPQNEEK (78 aa)) is disordered. Residues 33–42 (IQSSAATDGT) are compositionally biased toward polar residues. The span at 53 to 78 (SVKEDAKEKDEKTTQDQLEKPQNEEK) shows a compositional bias: basic and acidic residues.

The protein belongs to the PKI family.

Its function is as follows. Extremely potent competitive inhibitor of cAMP-dependent protein kinase activity, this protein interacts with the catalytic subunit of the enzyme after the cAMP-induced dissociation of its regulatory chains. This Homo sapiens (Human) protein is cAMP-dependent protein kinase inhibitor beta (PKIB).